A 987-amino-acid chain; its full sequence is MGVKQLLSEAQRNELMDLSRLTEWDLVTFRTFSKHDLHLILKHRRGYNRLGFALRLVLIRYPGWSLTEYKDIPQYVVAYVTSRLRIPPEEFLVYAKRGNTLWEHLGEIRTEYGYQNFSSEYKETLLQFLVQQAMDNNNTLYLIEITISTLRKTKVILPAMYVIEDIVWEAKQQADQKVYSILHDGLVQEQKDQLDALLLPTINGKSPLAWLKDVPAQPSPESFLKVIDRLQFVQKIGLTIDTTKINTNRLRQLARLGSKYEPYAFRRFNEVKRYSMLVSFLLEITQDLIDYAIEIHDRLMMNLQTKGKKEQDEIQQANGKKLNEKILQFITVCGTLIEAKETGKDAFAALDEVMSWNEMVESVEEAKQLSRPLNYDYLDLLNTRYSYVRRYAPTLLRSLHFRATKSGEPVLQALDTIHELNETGKRKVPHGAPLHFVSNRWQKHVYDDDGNINRHYYELAALTELRNHIRSGDIFVSGSRHHKAFDDYLIPYDEWNEVSNIPNGLTAPLKAEDYITDRINRLNEHLEWLSKNSEKLEGVDISQGKLHVERLDRGTPEEAKAFSKLLHSMLPRIKLTDLLIEVASWTGFHDQFIHASTNQSPDQEEQNIVLATLMAMGTNIGLTKMAEATPGISYRQMANASQWRMYDDAMVRAQSILVNFQKEQKLSSYWGDGTTSSSDGMRLSIAVRSLHADSNPHYGTGKGGTIYRFVSDQLSAYHVKVITTNARDALHVLDGLLHHETDLKIEEHYTDTAGYTDQVFALTHLLGFRFAPRIRDLADTKLFSIPGGEEYENVQALLKGKINVKLIKENYEDIRRLAYSVQTGKVSSALIMGKLGSYARQNKLATALGEMGRIEKTLFTLDYISNKAVRRRVQKGLNKGEAINALARTIFFGQRGEFRERALQDQLQRASALNIIINAISVWNTVYMEKAVEELKARGEFREDLMPYAWPLGWEHINFLGEYKFEGLHDTGQMNLRPLRIKEPFYS.

It belongs to the transposase 7 family.

Functionally, required for transposition of transposon Tn4430. The protein is Transposase for transposon Tn4430 (tnpA) of Bacillus thuringiensis.